The following is a 682-amino-acid chain: Potassium-transporting ATPase ATP-binding subunit (682 aa).

Helical transmembrane passes span 34-54 (PVMF…VAMA), 62-82 (AGFT…ANVA), 219-239 (IALT…TATL), and 254-274 (VLVA…LSAI). Aspartate 307 functions as the 4-aspartylphosphate intermediate in the catalytic mechanism. ATP contacts are provided by residues aspartate 344, glutamate 348, 377–384 (FTAQTRMS), and lysine 395. Residues aspartate 518 and aspartate 522 each coordinate Mg(2+). The next 3 helical transmembrane spans lie at 588 to 608 (FAII…LNVM), 616 to 636 (AILS…PLAL), and 662 to 682 (LVVP…FGLV).

This sequence belongs to the cation transport ATPase (P-type) (TC 3.A.3) family. Type IA subfamily. As to quaternary structure, the system is composed of three essential subunits: KdpA, KdpB and KdpC.

It localises to the cell inner membrane. It carries out the reaction K(+)(out) + ATP + H2O = K(+)(in) + ADP + phosphate + H(+). Its function is as follows. Part of the high-affinity ATP-driven potassium transport (or Kdp) system, which catalyzes the hydrolysis of ATP coupled with the electrogenic transport of potassium into the cytoplasm. This subunit is responsible for energy coupling to the transport system and for the release of the potassium ions to the cytoplasm. The protein is Potassium-transporting ATPase ATP-binding subunit of Enterobacter sp. (strain 638).